Reading from the N-terminus, the 766-residue chain is 5-methyltetrahydropteroyltriglutamate--homocysteine methyltransferase (766 aa).

5-methyltetrahydropteroyltri-L-glutamate is bound by residues 16–19 and K122; that span reads RELK. L-homocysteine is bound by residues 443–445 and E496; that span reads IGS. Residues 443-445 and E496 contribute to the L-methionine site; that span reads IGS. 5-methyltetrahydropteroyltri-L-glutamate-binding positions include 527–528 and W573; that span reads RC. D611 lines the L-homocysteine pocket. L-methionine is bound at residue D611. E617 contacts 5-methyltetrahydropteroyltri-L-glutamate. 3 residues coordinate Zn(2+): H653, C655, and E677. H706 functions as the Proton donor in the catalytic mechanism. Residue C738 coordinates Zn(2+).

This sequence belongs to the vitamin-B12 independent methionine synthase family. Requires Zn(2+) as cofactor.

It carries out the reaction 5-methyltetrahydropteroyltri-L-glutamate + L-homocysteine = tetrahydropteroyltri-L-glutamate + L-methionine. It participates in amino-acid biosynthesis; L-methionine biosynthesis via de novo pathway; L-methionine from L-homocysteine (MetE route): step 1/1. In terms of biological role, catalyzes the transfer of a methyl group from 5-methyltetrahydrofolate to homocysteine resulting in methionine formation. This Pseudomonas putida (strain W619) protein is 5-methyltetrahydropteroyltriglutamate--homocysteine methyltransferase.